The following is a 99-amino-acid chain: Plastocyanin (99 aa).

Positions 1 to 99 (VEVLLGASDG…AGMVGQVTVN (99 aa)) constitute a Plastocyanin-like domain. 4 residues coordinate Cu cation: H37, C84, H87, and M92.

This sequence belongs to the plastocyanin family. Requires Cu(2+) as cofactor.

The protein localises to the plastid. The protein resides in the chloroplast thylakoid membrane. In terms of biological role, participates in electron transfer between P700 and the cytochrome b6-f complex in photosystem I. The polypeptide is Plastocyanin (PETE) (Vicia faba (Broad bean)).